We begin with the raw amino-acid sequence, 393 residues long: Squamosa promoter-binding-like protein 11 (393 aa).

The tract at residues 74–96 (QSTSINSSSPEAKRCKLASESSP) is disordered. An SBP-type zinc finger spans residues 172-249 (VPRCQIDGCE…SHHNARRRKP (78 aa)). Zn(2+) is bound by residues Cys175, Cys180, Cys197, His200, Cys216, Cys219, His223, and Cys235. Positions 232-248 (KRSCRKRLSHHNARRRK) match the Bipartite nuclear localization signal motif.

Requires Zn(2+) as cofactor.

The protein resides in the nucleus. Trans-acting factor that binds specifically to the consensus nucleotide sequence 5'-TNCGTACAA-3'. The protein is Squamosa promoter-binding-like protein 11 (SPL11) of Arabidopsis thaliana (Mouse-ear cress).